Consider the following 271-residue polypeptide: 4-hydroxy-tetrahydrodipicolinate reductase (271 aa).

NAD(+) contacts are provided by residues 11-16 and Glu37; that span reads GGSGRM. An NADP(+)-binding site is contributed by Arg38. NAD(+) contacts are provided by residues 101–103 and 125–128; these read GTT and APNM. His158 (proton donor/acceptor) is an active-site residue. Position 159 (His159) interacts with (S)-2,3,4,5-tetrahydrodipicolinate. Lys162 acts as the Proton donor in catalysis. 168–169 is a (S)-2,3,4,5-tetrahydrodipicolinate binding site; the sequence is GT.

The protein belongs to the DapB family.

It is found in the cytoplasm. The enzyme catalyses (S)-2,3,4,5-tetrahydrodipicolinate + NAD(+) + H2O = (2S,4S)-4-hydroxy-2,3,4,5-tetrahydrodipicolinate + NADH + H(+). The catalysed reaction is (S)-2,3,4,5-tetrahydrodipicolinate + NADP(+) + H2O = (2S,4S)-4-hydroxy-2,3,4,5-tetrahydrodipicolinate + NADPH + H(+). It participates in amino-acid biosynthesis; L-lysine biosynthesis via DAP pathway; (S)-tetrahydrodipicolinate from L-aspartate: step 4/4. Its function is as follows. Catalyzes the conversion of 4-hydroxy-tetrahydrodipicolinate (HTPA) to tetrahydrodipicolinate. The polypeptide is 4-hydroxy-tetrahydrodipicolinate reductase (Shewanella piezotolerans (strain WP3 / JCM 13877)).